The following is a 968-amino-acid chain: RNA polymerase-associated protein RapA (968 aa).

Positions 164–334 (DVGRRHAPRV…FARLRLLDPN (171 aa)) constitute a Helicase ATP-binding domain. 177-184 (DEVGLGKT) is an ATP binding site. The short motif at 280–283 (DEAH) is the DEAH box element. In terms of domain architecture, Helicase C-terminal spans 490–644 (RVEWLMGYLT…TCPTGRTVYD (155 aa)).

Belongs to the SNF2/RAD54 helicase family. RapA subfamily. As to quaternary structure, interacts with the RNAP. Has a higher affinity for the core RNAP than for the holoenzyme. Its ATPase activity is stimulated by binding to RNAP.

Its function is as follows. Transcription regulator that activates transcription by stimulating RNA polymerase (RNAP) recycling in case of stress conditions such as supercoiled DNA or high salt concentrations. Probably acts by releasing the RNAP, when it is trapped or immobilized on tightly supercoiled DNA. Does not activate transcription on linear DNA. Probably not involved in DNA repair. This chain is RNA polymerase-associated protein RapA, found in Klebsiella pneumoniae (strain 342).